A 547-amino-acid chain; its full sequence is Chaperonin GroEL (547 aa).

ATP contacts are provided by residues 30–33 (TLGP), K51, 87–91 (DGTTT), G415, and D496.

The protein belongs to the chaperonin (HSP60) family. As to quaternary structure, forms a cylinder of 14 subunits composed of two heptameric rings stacked back-to-back. Interacts with the co-chaperonin GroES.

Its subcellular location is the cytoplasm. It catalyses the reaction ATP + H2O + a folded polypeptide = ADP + phosphate + an unfolded polypeptide.. Functionally, together with its co-chaperonin GroES, plays an essential role in assisting protein folding. The GroEL-GroES system forms a nano-cage that allows encapsulation of the non-native substrate proteins and provides a physical environment optimized to promote and accelerate protein folding. The polypeptide is Chaperonin GroEL (Histophilus somni (strain 129Pt) (Haemophilus somnus)).